We begin with the raw amino-acid sequence, 316 residues long: Arginine transport system permease protein ArgU (316 aa).

The segment covering 1–14 has biased composition (polar residues); it reads MSDLNQGPGASTAQ. Residues 1 to 20 form a disordered region; it reads MSDLNQGPGASTAQPKPIEA. Helical transmembrane passes span 29–49, 74–94, 108–128, 151–171, 217–237, and 251–271; these read WVAA…ALNN, IALT…LAVM, LYLW…WGLL, MFLL…AEIV, LISM…LELY, and VPML…LMVG. The ABC transmembrane type-1 domain maps to 70–274; sequence ALHTIALTLL…TSILMVGQYY (205 aa).

Belongs to the binding-protein-dependent transport system permease family. As to quaternary structure, the complex is probably composed of two ATP-binding proteins (ArgV), two transmembrane proteins (ArgU) and a solute-binding protein (ArgT).

It is found in the cell membrane. Part of the ABC transporter complex ArgTUV involved in L-arginine import. May also transport L-citrulline. Probably responsible for the translocation of the substrate across the membrane. This is Arginine transport system permease protein ArgU from Corynebacterium glutamicum (strain ATCC 13032 / DSM 20300 / JCM 1318 / BCRC 11384 / CCUG 27702 / LMG 3730 / NBRC 12168 / NCIMB 10025 / NRRL B-2784 / 534).